The following is a 296-amino-acid chain: Iron-sulfur cluster carrier protein (296 aa).

Residues 1–17 (MSSNPFRIQNPQPQPQR) are compositionally biased toward low complexity. The tract at residues 1 to 23 (MSSNPFRIQNPQPQPQRQPRDLR) is disordered. An ATP-binding site is contributed by 52–59 (GKGGVGKS).

Belongs to the Mrp/NBP35 ATP-binding proteins family. In terms of assembly, homodimer.

Functionally, binds and transfers iron-sulfur (Fe-S) clusters to target apoproteins. Can hydrolyze ATP. This is Iron-sulfur cluster carrier protein from Saccharolobus solfataricus (strain ATCC 35092 / DSM 1617 / JCM 11322 / P2) (Sulfolobus solfataricus).